The sequence spans 534 residues: Cytochrome P450 monooxygenase vrtK (534 aa).

Cys-448 contributes to the heme binding site.

This sequence belongs to the cytochrome P450 family. Requires heme as cofactor.

The protein operates within secondary metabolite biosynthesis; terpenoid biosynthesis. In terms of biological role, cytochrome P450 monooxygenase; part of the gene cluster that mediates the biosynthesis of viridicatumtoxin, a tetracycline-like fungal meroterpenoid with a unique, fused spirobicyclic ring system. The first step of the pathway is the production of the malonamoyl-CoA starter unit for the polyketide synthase vrtA. The aldolase vrtJ may be involved in the synthesis of the malonamate substrate for malonamoyl-CoA synthetase vrtB. The polyketide synthase vrtA then may utilize the malonamoyl-CoA starter unit, followed by sequential condensation of eight malonyl-CoA units to form the polyketide backbone. The cyclization of the last ring could be mediated by the lactamase-like protein vrtG. The proposed post-PKS tailoring steps are a hydroxylation at C5 catalyzed the cytochrome P450 monooxygenase vrtE, a hydroxylation at C12a catalyzed by VrtH and/or VrtI, and an O-methylation by the O-methyltransferase vrtF. VrtC is then proposed to catalyze the transfer of a geranyl group synthesized by vrtD to the aromatic C ring of the tetracyclic polyketide intermediate of viridicatumtoxin to yield previridicatumtoxin. Finally, the cytochrome P450 monooxygenase vrtK catalyzes the spirocyclization of the geranyl moiety of previridicatumtoxin to afford viridicatumtoxin. In Penicillium aethiopicum, this protein is Cytochrome P450 monooxygenase vrtK.